We begin with the raw amino-acid sequence, 391 residues long: Elongation factor Tu (391 aa).

The tr-type G domain maps to 10 to 201 (KPHVNIGTIG…AVDSYIPTPE (192 aa)). The tract at residues 19 to 26 (GHVDHGKT) is G1. 19–26 (GHVDHGKT) is a GTP binding site. A Mg(2+)-binding site is contributed by Thr26. Residues 55–59 (GITIS) form a G2 region. A G3 region spans residues 76 to 79 (DCPG). Residues 76–80 (DCPGH) and 131–134 (NKCD) each bind GTP. The segment at 131-134 (NKCD) is G4. Residues 169-171 (SAL) are G5.

The protein belongs to the TRAFAC class translation factor GTPase superfamily. Classic translation factor GTPase family. EF-Tu/EF-1A subfamily. Monomer.

The protein resides in the cytoplasm. The catalysed reaction is GTP + H2O = GDP + phosphate + H(+). Its function is as follows. GTP hydrolase that promotes the GTP-dependent binding of aminoacyl-tRNA to the A-site of ribosomes during protein biosynthesis. The sequence is that of Elongation factor Tu from Brucella canis (strain ATCC 23365 / NCTC 10854 / RM-666).